We begin with the raw amino-acid sequence, 434 residues long: Nicotinate phosphoribosyltransferase (434 aa).

At histidine 242 the chain carries Phosphohistidine; by autocatalysis.

It belongs to the NAPRTase family. Post-translationally, transiently phosphorylated on a His residue during the reaction cycle. Phosphorylation strongly increases the affinity for substrates and increases the rate of nicotinate D-ribonucleotide production. Dephosphorylation regenerates the low-affinity form of the enzyme, leading to product release.

It carries out the reaction nicotinate + 5-phospho-alpha-D-ribose 1-diphosphate + ATP + H2O = nicotinate beta-D-ribonucleotide + ADP + phosphate + diphosphate. Its pathway is cofactor biosynthesis; NAD(+) biosynthesis; nicotinate D-ribonucleotide from nicotinate: step 1/1. Its function is as follows. Catalyzes the synthesis of beta-nicotinate D-ribonucleotide from nicotinate and 5-phospho-D-ribose 1-phosphate at the expense of ATP. The chain is Nicotinate phosphoribosyltransferase from Brucella anthropi (strain ATCC 49188 / DSM 6882 / CCUG 24695 / JCM 21032 / LMG 3331 / NBRC 15819 / NCTC 12168 / Alc 37) (Ochrobactrum anthropi).